The following is a 220-amino-acid chain: Protein-L-isoaspartate O-methyltransferase (220 aa).

Serine 67 is an active-site residue.

This sequence belongs to the methyltransferase superfamily. L-isoaspartyl/D-aspartyl protein methyltransferase family.

Its subcellular location is the cytoplasm. The enzyme catalyses [protein]-L-isoaspartate + S-adenosyl-L-methionine = [protein]-L-isoaspartate alpha-methyl ester + S-adenosyl-L-homocysteine. Functionally, catalyzes the methyl esterification of L-isoaspartyl residues in peptides and proteins that result from spontaneous decomposition of normal L-aspartyl and L-asparaginyl residues. It plays a role in the repair and/or degradation of damaged proteins. The sequence is that of Protein-L-isoaspartate O-methyltransferase from Chlorobium phaeobacteroides (strain BS1).